Reading from the N-terminus, the 447-residue chain is 2-oxoadipate dioxygenase/decarboxylase (447 aa).

2-oxoadipate is bound by residues histidine 68, arginine 72, and histidine 224. Position 68 (histidine 68) interacts with Fe(2+). Positions 224 and 290 each coordinate Fe(2+). Valine 391 is a binding site for 2-oxoadipate.

This sequence belongs to the 2-oxoadipate dioxygenase/decarboxylase family. Requires Fe(2+) as cofactor.

The enzyme catalyses 2-oxoadipate + O2 = (R)-2-hydroxyglutarate + CO2. Catalyzes the decarboxylation and hydroxylation of 2-oxoadipate (2OA) to form D-2-hydroxyglutarate (D-2-HGA). The sequence is that of 2-oxoadipate dioxygenase/decarboxylase from Shigella flexneri.